Consider the following 602-residue polypeptide: ATP-dependent lipid A-core flippase 1 (602 aa).

Transmembrane regions (helical) follow at residues 36-56 (LGFV…VYFL), 80-100 (LFII…NYCL), 154-174 (ILTI…MFYY), 176-196 (WQLS…VSVV), and 261-281 (ASVP…FYAI). Residues 39–321 (VAAIIGMLGY…LTNVNSEFQQ (283 aa)) enclose the ABC transmembrane type-1 domain. The region spanning 362 to 599 (YKNTNTMTTS…QGAYAQLHSF (238 aa)) is the ABC transporter domain. Residue 398–405 (GRSGSGKS) coordinates ATP.

It belongs to the ABC transporter superfamily. Lipid exporter (TC 3.A.1.106) family. Homodimer.

It is found in the cell inner membrane. The enzyme catalyses ATP + H2O + lipid A-core oligosaccharideSide 1 = ADP + phosphate + lipid A-core oligosaccharideSide 2.. Its function is as follows. Involved in lipopolysaccharide (LPS) biosynthesis. Translocates lipid A-core from the inner to the outer leaflet of the inner membrane. Transmembrane domains (TMD) form a pore in the inner membrane and the ATP-binding domain (NBD) is responsible for energy generation. The chain is ATP-dependent lipid A-core flippase 1 from Colwellia psychrerythraea (strain 34H / ATCC BAA-681) (Vibrio psychroerythus).